A 309-amino-acid polypeptide reads, in one-letter code: Putative lipid kinase YtlR (309 aa).

The DAGKc domain maps to 1-134 (MSHWFFIINP…FHLGSVNFLQ (134 aa)). ATP-binding positions include 9–13 (NPTAG), Thr40, and 69–75 (GDGTMHE). The Mg(2+) site is built by Asn229, Glu232, and Thr234. Glu289 (proton acceptor) is an active-site residue.

It belongs to the diacylglycerol/lipid kinase family. The cofactor is Mg(2+).

In terms of biological role, may catalyze the ATP-dependent phosphorylation of lipids other than diacylglycerol (DAG). In fact, is not able to exhibit diacylglycerol kinase activity in vitro. This is Putative lipid kinase YtlR (ytlR) from Bacillus subtilis (strain 168).